The chain runs to 76 residues: Exodeoxyribonuclease 7 small subunit (76 aa).

This sequence belongs to the XseB family. Heterooligomer composed of large and small subunits.

The protein localises to the cytoplasm. The catalysed reaction is Exonucleolytic cleavage in either 5'- to 3'- or 3'- to 5'-direction to yield nucleoside 5'-phosphates.. In terms of biological role, bidirectionally degrades single-stranded DNA into large acid-insoluble oligonucleotides, which are then degraded further into small acid-soluble oligonucleotides. This Arthrobacter sp. (strain FB24) protein is Exodeoxyribonuclease 7 small subunit.